The sequence spans 259 residues: Peptide methionine sulfoxide reductase (259 aa).

The disordered stretch occupies residues Thr-66–Pro-90.

The protein belongs to the MsrA Met sulfoxide reductase family.

The catalysed reaction is L-methionyl-[protein] + [thioredoxin]-disulfide + H2O = L-methionyl-(S)-S-oxide-[protein] + [thioredoxin]-dithiol. The enzyme catalyses [thioredoxin]-disulfide + L-methionine + H2O = L-methionine (S)-S-oxide + [thioredoxin]-dithiol. In terms of biological role, has an important function as a repair enzyme for proteins that have been inactivated by oxidation. Catalyzes the reversible oxidation-reduction of methionine sulfoxide in proteins to methionine. The protein is Peptide methionine sulfoxide reductase of Lactuca sativa (Garden lettuce).